A 201-amino-acid polypeptide reads, in one-letter code: Large ribosomal subunit protein bL25 (201 aa).

Belongs to the bacterial ribosomal protein bL25 family. CTC subfamily. As to quaternary structure, part of the 50S ribosomal subunit; part of the 5S rRNA/L5/L18/L25 subcomplex. Contacts the 5S rRNA. Binds to the 5S rRNA independently of L5 and L18.

Its function is as follows. This is one of the proteins that binds to the 5S RNA in the ribosome where it forms part of the central protuberance. This chain is Large ribosomal subunit protein bL25, found in Burkholderia cenocepacia (strain HI2424).